Reading from the N-terminus, the 554-residue chain is Asparagine synthetase B [glutamine-hydrolyzing] (554 aa).

The active-site For GATase activity is the Cys2. Residues 2 to 186 enclose the Glutamine amidotransferase type-2 domain; sequence CSIFGVFDIK…AGSYLWSQDG (185 aa). L-glutamine is bound by residues 50–54, 75–77, and Asp99; these read RLSIV and NGE. ATP contacts are provided by residues Leu233, Val273, and 347–348; that span reads SG.

It belongs to the asparagine synthetase family. In terms of assembly, homodimer.

The catalysed reaction is L-aspartate + L-glutamine + ATP + H2O = L-asparagine + L-glutamate + AMP + diphosphate + H(+). Its pathway is amino-acid biosynthesis; L-asparagine biosynthesis; L-asparagine from L-aspartate (L-Gln route): step 1/1. With respect to regulation, glutamine-dependent asparagine synthesis activity can be inhibited by aspartic acid analogs (such as a sulfinate derivative and (2S,3R)-2-amino-3-methylsuccinate) in vitro; the inhibition is competitive with respect to aspartate. Catalyzes the ATP-dependent conversion of aspartate into asparagine, using glutamine as a source of nitrogen. Can also use ammonia as the nitrogen source in vitro, albeit with lower efficiency. As nucleotide substrates, ATP and dATP are utilized at a similar rate in both the glutamine- and ammonia-dependent reactions, whereas GTP utilization is only 15% that of ATP, and CTP, UTP, ITP and XTP are very poor or not substrates. Also exhibits glutaminase activity. The chain is Asparagine synthetase B [glutamine-hydrolyzing] (asnB) from Escherichia coli (strain K12).